The following is a 285-amino-acid chain: Eukaryotic translation initiation factor 3 subunit F-2 (285 aa).

Residues 11–145 (VFLKPLVLFQ…TRLYCAVEMG (135 aa)) enclose the MPN domain.

It belongs to the eIF-3 subunit F family. Component of the eukaryotic translation initiation factor 3 (eIF-3) complex. The eIF-3 complex interacts with pix.

It localises to the cytoplasm. In terms of biological role, component of the eukaryotic translation initiation factor 3 (eIF-3) complex, which is involved in protein synthesis of a specialized repertoire of mRNAs and, together with other initiation factors, stimulates binding of mRNA and methionyl-tRNAi to the 40S ribosome. The eIF-3 complex specifically targets and initiates translation of a subset of mRNAs involved in cell proliferation. The sequence is that of Eukaryotic translation initiation factor 3 subunit F-2 from Drosophila sechellia (Fruit fly).